The following is a 389-amino-acid chain: tRNA-specific 2-thiouridylase MnmA (389 aa).

ATP contacts are provided by residues 21–28 (AMSGGVDS) and leucine 47. Residue cysteine 115 is the Nucleophile of the active site. A disulfide bond links cysteine 115 and cysteine 212. Residue glycine 139 coordinates ATP. Residues 162–164 (RDQ) are interaction with tRNA. The Cysteine persulfide intermediate role is filled by cysteine 212.

Belongs to the MnmA/TRMU family.

The protein resides in the cytoplasm. It carries out the reaction S-sulfanyl-L-cysteinyl-[protein] + uridine(34) in tRNA + AH2 + ATP = 2-thiouridine(34) in tRNA + L-cysteinyl-[protein] + A + AMP + diphosphate + H(+). In terms of biological role, catalyzes the 2-thiolation of uridine at the wobble position (U34) of tRNA, leading to the formation of s(2)U34. This is tRNA-specific 2-thiouridylase MnmA from Xanthobacter autotrophicus (strain ATCC BAA-1158 / Py2).